The primary structure comprises 151 residues: Neuroglobin (151 aa).

The Globin domain occupies 1-149; sequence MELPEPELIR…VVQAMSRGWG (149 aa). The heme b site is built by H64 and H96.

It belongs to the globin family. In terms of assembly, monomer. Homodimer and homotetramer; disulfide-linked. Mainly monomeric but also detected as part of homodimers and homotetramers. Interacts with 14-3-3 proteins; regulates the phosphorylation of NGB. Could interact (ferrous form) with G-alpha(i) proteins (GTP-bound form). Phosphorylated during hypoxia by ERK1/ERK2. Phosphorylation regulates the heme pocket hexacoordination preventing the association of His-64 with the heme metal center. Thereby, promotes the access of dioxygen and nitrite to the heme and stimulates the nitrite reductase activity. Phosphorylation during hypoxia is stabilized by 14-3-3 proteins.

It localises to the cytoplasm. The protein resides in the cytosol. The protein localises to the mitochondrion matrix. It catalyses the reaction Fe(III)-heme b-[protein] + nitric oxide + H2O = Fe(II)-heme b-[protein] + nitrite + 2 H(+). Functionally, monomeric globin with a bis-histidyl six-coordinate heme-iron atom through which it can bind dioxygen, carbon monoxide and nitric oxide. Could help transport oxygen and increase its availability to the metabolically active neuronal tissues, though its low quantity in tissues as well as its high affinity for dioxygen, which may limit its oxygen-releasing ability, argue against it. The ferrous/deoxygenated form exhibits a nitrite reductase activity and it could produce nitric oxide which in turn inhibits cellular respiration in response to hypoxia. In its ferrous/deoxygenated state, it may also exhibit GDI (Guanine nucleotide Dissociation Inhibitor) activity toward heterotrimeric G-alpha proteins, thereby regulating signal transduction to facilitate neuroprotective responses in the wake of hypoxia and associated oxidative stress. The sequence is that of Neuroglobin from Bos taurus (Bovine).